The sequence spans 110 residues: MEQMKITNLTDEQISFQLILHSGNARSCIIQSLRAYKEGKKDEADALIAKAEQDLSAAHDIHFQMIQKESGGEATAFSLLLMHAEDHLMSTLSMKELVKEMLDLFKTKNI.

A PTS EIIA type-3 domain is found at 9 to 107; sequence LTDEQISFQL…VKEMLDLFKT (99 aa). The active-site Tele-phosphohistidine intermediate is histidine 83. A Phosphohistidine; by HPr modification is found at histidine 83.

It is found in the cytoplasm. Its function is as follows. The phosphoenolpyruvate-dependent sugar phosphotransferase system (sugar PTS), a major carbohydrate active transport system, catalyzes the phosphorylation of incoming sugar substrates concomitantly with their translocation across the cell membrane. The enzyme II GmuABC PTS system is involved in the transport of oligo-glucomannans such as cellobiose or mannobiose. This Bacillus subtilis (strain 168) protein is PTS system oligo-beta-mannoside-specific EIIA component.